We begin with the raw amino-acid sequence, 118 residues long: Large ribosomal subunit protein uL18 (118 aa).

The protein belongs to the universal ribosomal protein uL18 family. Part of the 50S ribosomal subunit; part of the 5S rRNA/L5/L18/L25 subcomplex. Contacts the 5S and 23S rRNAs.

In terms of biological role, this is one of the proteins that bind and probably mediate the attachment of the 5S RNA into the large ribosomal subunit, where it forms part of the central protuberance. This is Large ribosomal subunit protein uL18 from Lactobacillus acidophilus (strain ATCC 700396 / NCK56 / N2 / NCFM).